Consider the following 720-residue polypeptide: Putative glutamine--fructose-6-phosphate aminotransferase [isomerizing] (720 aa).

The active-site Nucleophile; for GATase activity is Cys2. A Glutamine amidotransferase type-2 domain is found at Cys2–Gly321. Polar residues predominate over residues Ser266 to Pro280. The tract at residues Ser266–Leu285 is disordered. SIS domains are found at residues Trp393–Ser532 and Cys565–Pro710.

It catalyses the reaction D-fructose 6-phosphate + L-glutamine = D-glucosamine 6-phosphate + L-glutamate. It participates in nucleotide-sugar biosynthesis; UDP-N-acetyl-alpha-D-glucosamine biosynthesis; alpha-D-glucosamine 6-phosphate from D-fructose 6-phosphate: step 1/1. Involved in amino sugar synthesis (formation of chitin, supplies the amino sugars of asparagine-linked oligosaccharides of glycoproteins). This Saccharomyces cerevisiae (strain RM11-1a) (Baker's yeast) protein is Putative glutamine--fructose-6-phosphate aminotransferase [isomerizing].